We begin with the raw amino-acid sequence, 724 residues long: Pre-mRNA-splicing factor CLF1 (724 aa).

16 HAT repeats span residues 55–87 (EFQARKRTEFESRIRYSRDSILAWTKYAQWEAS), 89–121 (NEYERSRSVFERALDVDPRSVDLWIKYTDMELK), 123–155 (RNINHARNLFDRAITLLPRVDALWYKYVYLEEL), 157–188 (LNVSGARQIFERWMQWEPNDKAWQSYIKLEER), 190–221 (NELDRASAIYERWIACRPIPKNWVAWAKFEED), 223–262 (GQPDKAREVFQTALEFFGDEEEQVEKAQSVFAAFARMETR), 264–298 (KEFERARVIYKFALARLPRSKSASLYAQYTKFEKQ), 308–340 (TVLGKRRIQYEEELAYDPTNYDAWFSLARLEED), 352–386 (VEPMRVREVYERAVANVPPALEKRYWRRYIYLWLQ), 396–432 (KDYDRARDVYKAAVKLVPHKTFTFAKLWLAYAYFEIR), 434–465 (LDVSAARKVLGAGIGMCPKPKLFTGYIELEMR), 467–499 (REFDRVRTLYEKFLTYDPSLSSAWIQWTQVESA), 501–534 (EDFERVRAIFELAVQQSLDMPEIVWKAYIDFEAG), 536–567 (GERERARNLYERLLERTSHVKVWISYALMEIA), 585–626 (GDAD…EHGD), and 635–667 (DMLPTTRKRWRKAEDGSGELEEYWDLVFPDDEK). Residues 681–724 (QAWAQQRAGQGEEGGLSYDLPSDSESENEDEDGDNREEEGMDQD) are disordered. Residues 702-724 (SDSESENEDEDGDNREEEGMDQD) are compositionally biased toward acidic residues.

This sequence belongs to the crooked-neck family. As to quaternary structure, associated with the spliceosome.

The protein resides in the nucleus. Its function is as follows. Involved in pre-mRNA splicing and cell cycle progression. Required for the spliceosome assembly and initiation of the DNA replication. The protein is Pre-mRNA-splicing factor CLF1 (CLF1) of Cryptococcus neoformans var. grubii serotype A (strain H99 / ATCC 208821 / CBS 10515 / FGSC 9487) (Filobasidiella neoformans var. grubii).